Consider the following 340-residue polypeptide: UDP-N-acetylglucosamine--N-acetylmuramyl-(pentapeptide) pyrophosphoryl-undecaprenol N-acetylglucosamine transferase (340 aa).

UDP-N-acetyl-alpha-D-glucosamine is bound by residues 10-12, Asn124, Ser179, and Gln277; that span reads TGG.

This sequence belongs to the glycosyltransferase 28 family. MurG subfamily.

It localises to the cell inner membrane. The catalysed reaction is di-trans,octa-cis-undecaprenyl diphospho-N-acetyl-alpha-D-muramoyl-L-alanyl-D-glutamyl-meso-2,6-diaminopimeloyl-D-alanyl-D-alanine + UDP-N-acetyl-alpha-D-glucosamine = di-trans,octa-cis-undecaprenyl diphospho-[N-acetyl-alpha-D-glucosaminyl-(1-&gt;4)]-N-acetyl-alpha-D-muramoyl-L-alanyl-D-glutamyl-meso-2,6-diaminopimeloyl-D-alanyl-D-alanine + UDP + H(+). The protein operates within cell wall biogenesis; peptidoglycan biosynthesis. Cell wall formation. Catalyzes the transfer of a GlcNAc subunit on undecaprenyl-pyrophosphoryl-MurNAc-pentapeptide (lipid intermediate I) to form undecaprenyl-pyrophosphoryl-MurNAc-(pentapeptide)GlcNAc (lipid intermediate II). This is UDP-N-acetylglucosamine--N-acetylmuramyl-(pentapeptide) pyrophosphoryl-undecaprenol N-acetylglucosamine transferase from Sulfurimonas denitrificans (strain ATCC 33889 / DSM 1251) (Thiomicrospira denitrificans (strain ATCC 33889 / DSM 1251)).